The following is a 389-amino-acid chain: Succinate--CoA ligase [ADP-forming] subunit beta (389 aa).

The 228-residue stretch at 9–236 (KELFASHGVP…KDAEDPLEAK (228 aa)) folds into the ATP-grasp domain. Residues lysine 45, 52–54 (GRG), serine 94, and glutamate 99 each bind ATP. Residues asparagine 191 and aspartate 205 each contribute to the Mg(2+) site. Residues asparagine 256 and 318-320 (GIT) each bind substrate.

This sequence belongs to the succinate/malate CoA ligase beta subunit family. In terms of assembly, heterotetramer of two alpha and two beta subunits. Requires Mg(2+) as cofactor.

The enzyme catalyses succinate + ATP + CoA = succinyl-CoA + ADP + phosphate. It catalyses the reaction GTP + succinate + CoA = succinyl-CoA + GDP + phosphate. The protein operates within carbohydrate metabolism; tricarboxylic acid cycle; succinate from succinyl-CoA (ligase route): step 1/1. In terms of biological role, succinyl-CoA synthetase functions in the citric acid cycle (TCA), coupling the hydrolysis of succinyl-CoA to the synthesis of either ATP or GTP and thus represents the only step of substrate-level phosphorylation in the TCA. The beta subunit provides nucleotide specificity of the enzyme and binds the substrate succinate, while the binding sites for coenzyme A and phosphate are found in the alpha subunit. This chain is Succinate--CoA ligase [ADP-forming] subunit beta, found in Saccharopolyspora erythraea (strain ATCC 11635 / DSM 40517 / JCM 4748 / NBRC 13426 / NCIMB 8594 / NRRL 2338).